Here is a 684-residue protein sequence, read N- to C-terminus: Cleavage and polyadenylation specificity factor subunit 3 (684 aa).

Position 2 is an N-acetylserine (Ser-2). Residues His-71, His-73, Asp-75, His-76, His-158, and Asp-179 each contribute to the Zn(2+) site. The active-site Proton donor is the His-396. Zn(2+) is bound at residue His-418. Residues Lys-462, Lys-465, and Lys-545 each participate in a glycyl lysine isopeptide (Lys-Gly) (interchain with G-Cter in SUMO) cross-link. Ser-659 is subject to Phosphoserine. Thr-681 is modified (phosphothreonine).

This sequence belongs to the metallo-beta-lactamase superfamily. RNA-metabolizing metallo-beta-lactamase-like family. CPSF3 subfamily. Component of the cleavage and polyadenylation specificity factor (CPSF) complex, composed of CPSF1, CPSF2, CPSF3, CPSF4 and FIP1L1. Interacts with CPSF2, CSTF2 and SYMPK. Interacts with TUT1; the interaction is direct and mediates the recruitment of the CPSF complex on the 3'UTR of pre-mRNAs. Interacts with WDR33. Interacts with ZC3H3. It depends on Zn(2+) as a cofactor. In terms of processing, sumoylated on Lys-462, Lys-465 and Lys-545, preferentially by SUMO3.

The protein localises to the nucleus. Its function is as follows. Component of the cleavage and polyadenylation specificity factor (CPSF) complex that plays a key role in pre-mRNA 3'-end formation, recognizing the AAUAAA signal sequence and interacting with poly(A) polymerase and other factors to bring about cleavage and poly(A) addition. Has endonuclease activity, and functions as an mRNA 3'-end-processing endonuclease. Also involved in the histone 3'-end pre-mRNA processing. U7 snRNP-dependent protein that induces both the 3'-endoribonucleolytic cleavage of histone pre-mRNAs and acts as a 5' to 3' exonuclease for degrading the subsequent downstream cleavage product (DCP) of mature histone mRNAs. Cleavage occurs after the 5'-ACCCA-3' sequence in the histone pre-mRNA leaving a 3'hydroxyl group on the upstream fragment containing the stem loop (SL) and 5' phosphate on the downstream cleavage product (DCP) starting with CU nucleotides. The U7-dependent 5' to 3' exonuclease activity is processive and degrades the DCP RNA substrate even after complete removal of the U7-binding site. Binds to the downstream cleavage product (DCP) of histone pre-mRNAs and the cleaved DCP RNA substrate in a U7 snRNP dependent manner. Required for entering/progressing through S-phase of the cell cycle. Required for the selective processing of microRNAs (miRNAs) during embryonic stem cell differentiation via its interaction with ISY1. Required for the biogenesis of all miRNAs from the pri-miR-17-92 primary transcript except miR-92a. Only required for the biogenesis of miR-290 and miR-96 from the pri-miR-290-295 and pri-miR-96-183 primary transcripts, respectively. This is Cleavage and polyadenylation specificity factor subunit 3 (CPSF3) from Bos taurus (Bovine).